Consider the following 434-residue polypeptide: Exopolygalacturonase X-1 (434 aa).

A signal peptide spans 1–22; the sequence is MKLSHLLTSAVSVLSLGLTVEG. N-linked (GlcNAc...) asparagine glycosylation is found at asparagine 113, asparagine 129, and asparagine 199. The PbH1 1 repeat unit spans residues 231 to 252; that stretch reads SKNIVIQNSVINNGDDCVSFKP. Aspartate 245 serves as the catalytic Proton donor. A disulfide bridge links cysteine 247 with cysteine 264. Asparagine 253 and asparagine 265 each carry an N-linked (GlcNAc...) asparagine glycan. Residues 254–274 form a PbH1 2 repeat; it reads STEILVQNLYCNGSHGISVGS. Histidine 268 is an active-site residue. N-linked (GlcNAc...) asparagine glycans are attached at residues asparagine 292, asparagine 297, asparagine 329, asparagine 354, and asparagine 364. One copy of the PbH1 3 repeat lies at 327–348; the sequence is VSNITYEDMYIENVDWAIEITQ. The PbH1 4 repeat unit spans residues 362 to 405; that stretch reads PSNLTISDVYISNMYGTTSSARDPNIGTIVCSSPDVCSNIYVEN. Cysteine 392 and cysteine 398 are oxidised to a cystine. 2 N-linked (GlcNAc...) asparagine glycosylation sites follow: asparagine 423 and asparagine 430.

The protein belongs to the glycosyl hydrolase 28 family.

The protein resides in the secreted. It catalyses the reaction [(1-&gt;4)-alpha-D-galacturonosyl](n) + H2O = alpha-D-galacturonate + [(1-&gt;4)-alpha-D-galacturonosyl](n-1). Functionally, specific in hydrolyzing the terminal glycosidic bond of polygalacturonic acid and oligogalacturonates. The protein is Exopolygalacturonase X-1 (pgaX-1) of Emericella nidulans (strain FGSC A4 / ATCC 38163 / CBS 112.46 / NRRL 194 / M139) (Aspergillus nidulans).